A 240-amino-acid chain; its full sequence is uncharacterized protein (240 aa).

The C2H2-type zinc finger occupies 3–27 (LKCLECDKLLSSIEMAEFHSTKTSH). 2 disordered regions span residues 21–43 (HSTK…RSPE) and 120–171 (AEIE…RFSI). Positions 120-136 (AEIERDKKRRAAERENK) are enriched in basic and acidic residues. Over residues 155 to 166 (SSSTCTRTPPTS) the composition is skewed to low complexity.

This is an uncharacterized protein from Schizosaccharomyces pombe (strain 972 / ATCC 24843) (Fission yeast).